We begin with the raw amino-acid sequence, 426 residues long: Serine--tRNA ligase (426 aa).

233–235 (TAE) lines the L-serine pocket. 264–266 (RSE) contacts ATP. Residue Glu-287 participates in L-serine binding. Residue 351 to 354 (EISS) participates in ATP binding. Ser-387 contributes to the L-serine binding site.

It belongs to the class-II aminoacyl-tRNA synthetase family. Type-1 seryl-tRNA synthetase subfamily. As to quaternary structure, homodimer. The tRNA molecule binds across the dimer.

The protein localises to the cytoplasm. It catalyses the reaction tRNA(Ser) + L-serine + ATP = L-seryl-tRNA(Ser) + AMP + diphosphate + H(+). It carries out the reaction tRNA(Sec) + L-serine + ATP = L-seryl-tRNA(Sec) + AMP + diphosphate + H(+). The protein operates within aminoacyl-tRNA biosynthesis; selenocysteinyl-tRNA(Sec) biosynthesis; L-seryl-tRNA(Sec) from L-serine and tRNA(Sec): step 1/1. Functionally, catalyzes the attachment of serine to tRNA(Ser). Is also able to aminoacylate tRNA(Sec) with serine, to form the misacylated tRNA L-seryl-tRNA(Sec), which will be further converted into selenocysteinyl-tRNA(Sec). The sequence is that of Serine--tRNA ligase from Stutzerimonas stutzeri (strain A1501) (Pseudomonas stutzeri).